A 264-amino-acid polypeptide reads, in one-letter code: Outer kinetochore KNL1 complex subunit sos7 (264 aa).

The stretch at 90–236 (EAEDNEKLET…SNQIKAAIHT (147 aa)) forms a coiled coil.

This sequence belongs to the KRE28 family. In terms of assembly, component of the KNL1/SPC105 complex composed of at least spc7 and sos7. Part of the outer kinetochore KMN network that includes the KNL1, MIS12 and NDC80 complexes. Interacts (via C-terminus) with spc7 (via C-terminus); the interaction is direct.

It localises to the nucleus. It is found in the chromosome. The protein resides in the centromere. Its subcellular location is the kinetochore. Its function is as follows. Acts as a component of the outer kinetochore KNL1 complex that facilitates microtubule-kinetochore interactions and the spindle assembly checkpoint. Kinetochores, consisting of a centromere-associated inner segment and a microtubule-contacting outer segment, play a crucial role in chromosome segregation by mediating the physical connection between centromeric DNA and spindle microtubules. The outer kinetochore is made up of the ten-subunit KMN network, comprising the MIS12, NDC80 and KNL1 complexes, and auxiliary microtubule-associated components; together they connect the outer kinetochore with the inner kinetochore, bind microtubules, and mediate interactions with mitotic checkpoint proteins that delay anaphase until chromosomes are bioriented on the spindle. This chain is Outer kinetochore KNL1 complex subunit sos7 (sos7), found in Schizosaccharomyces pombe (strain 972 / ATCC 24843) (Fission yeast).